The chain runs to 40 residues: Protamine-1 (40 aa).

Residues 1 to 40 (MPPRRKRVSSAPRRRRRTYRRTTAHKHQDRPVHRRRRRRH) form a disordered region.

In terms of tissue distribution, testis.

The protein resides in the nucleus. The protein localises to the chromosome. In terms of biological role, protamines substitute for histones in the chromatin of sperm during the haploid phase of spermatogenesis. They compact sperm DNA into a highly condensed, stable and inactive complex. The chain is Protamine-1 (PBP1) from Bufo japonicus (Japanese common toad).